A 129-amino-acid chain; its full sequence is Prefoldin subunit 6 (129 aa).

Coiled-coil stretches lie at residues 6–26 (VRDLQRDLENKANDLGKIQKD) and 84–118 (IEYISAELKRLDAILQDMEEKQNNKRETIMKLQQR).

This sequence belongs to the prefoldin subunit beta family. As to quaternary structure, heterohexamer of two PFD-alpha type and four PFD-beta type subunits forming prefoldin co-chaperone complex. Interacts with PFD2, PFD3, PFD4 and PFD5. Interacts with LSM8, a specific subunit of the LSM2-8 complex, which is a core component of the spliceosome. Binds to HSP90 to facilitate the formation of a larger complex made at least of HSP90, PFD6 and LSM8.

The protein localises to the cytoplasm. It is found in the nucleus. Functionally, binds specifically to cytosolic chaperonin (c-CPN) and transfers target proteins to it. Binds to nascent polypeptide chain and promotes folding in an environment in which there are many competing pathways for nonnative proteins. Together with other chaperonins, contribute to the regulation of gene expression by modulating the spliceosome function on pre-mRNA splicing post-transcriptionally by acting as a co-chaperone of Hsp90 to control levels of LSM8. Required for the biogenesis of tubulins and for subsequent microtubules (MTs) organization and dynamicity, but unable to associate with microtubules. Involved in the process leading to microtubules dissociation in response to gibberellic acid (GA) probably due to the DELLA proteins-mediated translocation of the prefoldin co-chaperone complex from the cytoplasm to the nucleus. Contributes to the GA-dependent regulation of PIN2 trafficking at the plasma membrane, thus influencing auxin flux. This is Prefoldin subunit 6 from Arabidopsis thaliana (Mouse-ear cress).